The chain runs to 261 residues: Small ribosomal subunit protein mS23 (261 aa).

Positions 228-261 (EQRAAAFTGAPEIPSTEDSLGLEEGVEEKQPQQA) are disordered.

It belongs to the mitochondrion-specific ribosomal protein mS23 family. In terms of assembly, component of the mitochondrial small ribosomal subunit.

Its subcellular location is the mitochondrion. This is Small ribosomal subunit protein mS23 (rsm25) from Aspergillus oryzae (strain ATCC 42149 / RIB 40) (Yellow koji mold).